Here is a 490-residue protein sequence, read N- to C-terminus: Aspartyl/glutamyl-tRNA(Asn/Gln) amidotransferase subunit B (490 aa).

The protein belongs to the GatB/GatE family. GatB subfamily. Heterotrimer of A, B and C subunits.

The catalysed reaction is L-glutamyl-tRNA(Gln) + L-glutamine + ATP + H2O = L-glutaminyl-tRNA(Gln) + L-glutamate + ADP + phosphate + H(+). It catalyses the reaction L-aspartyl-tRNA(Asn) + L-glutamine + ATP + H2O = L-asparaginyl-tRNA(Asn) + L-glutamate + ADP + phosphate + 2 H(+). Functionally, allows the formation of correctly charged Asn-tRNA(Asn) or Gln-tRNA(Gln) through the transamidation of misacylated Asp-tRNA(Asn) or Glu-tRNA(Gln) in organisms which lack either or both of asparaginyl-tRNA or glutaminyl-tRNA synthetases. The reaction takes place in the presence of glutamine and ATP through an activated phospho-Asp-tRNA(Asn) or phospho-Glu-tRNA(Gln). This chain is Aspartyl/glutamyl-tRNA(Asn/Gln) amidotransferase subunit B, found in Prochlorococcus marinus (strain AS9601).